Reading from the N-terminus, the 892-residue chain is Inner centromere protein B (892 aa).

Disordered stretches follow at residues 50 to 124 (AEPE…KRMT), 160 to 182 (EHER…EMKT), 255 to 286 (LVNE…SLVV), 305 to 470 (KRES…PPPH), 502 to 555 (KRNT…RRED), 569 to 687 (QLEE…RERE), 702 to 760 (ERAA…AAAA), and 797 to 819 (NYGM…KPIP). The span at 60 to 69 (SQKRRRKKRT) shows a compositional bias: basic residues. The segment covering 90-99 (SANWSSSVRR) has biased composition (low complexity). The span at 259–272 (QPLNLSNESATPTG) shows a compositional bias: polar residues. Residues 305-315 (KRESMTREAVR) show a composition bias toward basic and acidic residues. The span at 316–326 (KSIRQSISKKK) shows a compositional bias: basic residues. The segment covering 332–343 (SSTSSQRSCHSS) has biased composition (low complexity). Residues 431 to 444 (RAVDELSDDERPSE) show a composition bias toward basic and acidic residues. Positions 455–470 (PSPPCPPSKIVKPPPH) are enriched in pro residues. Composition is skewed to basic and acidic residues over residues 509 to 555 (PDPK…RRED), 569 to 602 (QLEE…EEKA), 609 to 687 (KKQE…RERE), and 702 to 754 (ERAA…KAKE). An SAH region spans residues 512–725 (KSEEKERQRL…EERKKREQQQ (214 aa)). The tract at residues 802–876 (LNSDDSTDDE…RTSSAVWHSP (75 aa)) is IN box. Phosphoserine occurs at positions 869 and 870.

This sequence belongs to the INCENP family. In terms of assembly, component of the CPC at least composed of survivin/birc5, incenp, cdca8/borealin and/or cdca9/dasra-A, and aurkb/aurora-B. Interacts (via C-terminus) with aurkb (via N-terminus and kinase domain). Interacts (via N-terminus) with birc5.1, birc5.2, cdca8 and cdca9. Interacts with mtus1.

It localises to the nucleus. Its subcellular location is the chromosome. The protein resides in the centromere. The protein localises to the cytoplasm. It is found in the cytoskeleton. It localises to the spindle. Its subcellular location is the midbody. The protein resides in the kinetochore. Functionally, component of the chromosomal passenger complex (CPC), a complex that acts as a key regulator of mitosis. The CPC complex has essential functions at the centromere in ensuring correct chromosome alignment and segregation and is required for chromatin-induced microtubule stabilization and spindle assembly. Acts as a scaffold regulating CPC localization and activity. The C-terminus associates with aurkb/aurora-B, the N-terminus associated with cdca8/borealin and/or cdca9/dasra-A tethers the CPC to the inner centromere, and the microtubule binding activity within the central SAH domain directs aurkb/aurora-B toward substrates near microtubules. Activates aurkb. The sequence is that of Inner centromere protein B (incenp-b) from Xenopus laevis (African clawed frog).